The primary structure comprises 119 residues: uncharacterized protein (119 aa).

Residues 80-104 traverse the membrane as a helical segment; that stretch reads VFPLVYLFCVVFQFLSLGCYLSIFF.

The protein resides in the membrane. This is an uncharacterized protein from Saccharomyces cerevisiae (strain ATCC 204508 / S288c) (Baker's yeast).